A 1006-amino-acid polypeptide reads, in one-letter code: MTELKKIPSPSHPADEGGNTIEARFAHFSKNDLRLDDDKFLAQATKLLDESKHLLMANVPALGTGTLDEAERYWFAFVLYSVRKLSENGDSVEKGLNLCQILRAARLNIDDFYKELYQFLIKVGSILSNLYGGDWQKRLEAKESHTNFVHLFCLSKKYKNAYRELFSIVNANNDKQLNVANASGCESDYYRFGWLLFLALRVHVFRPCKTLVSCTHGLVSVLAILLIHVPAHFRNLNLNDSERIVMRGDKADLVASLCNMYGTSEDELRKTLEKANNLITDILKKKPCLASECKPANLENIVTDGLVYFEGLMDESSLSSSIYLLEKDYDAATHDMDGLDEMIFLNENDSLLGSGSLSGGATNSYGNGTKRKLDAMSSPAKTITSPLSPHRSPICHSNGFIVGGISKMASTPVTTAMTTAKWLRTVIAPLPSKPSAELEKFLTSCDRDVTPDVTRRAQIILEAIFPSSGLGQNASLMDNIWAEQRRMEAMKLYFRVLQALCTAESQILHANNLTSLLTNERFHRCMLACSAELVLATHKTVTMLFPTVLERTGITAFDLSKVIESFIRHEESLPRELRRHLNSLEERLLESMVWEKGSSMYNSLIVARPALSAEISRLGLLAEPMPSLDAIAMHNNMSCGVLPPMQALLKHEKHGQNGDIRSPKRVCTEYRSVLVERNSFTSPVKDRLLALNNLKSKFPPPILHSAFASPTRPSPGGGGETCAETAVNVFFSKIVKLAAVRINGMVERLQLSQQIRESVYCLFQKILSQRTTLFFNRHIDQILLCCFYGVSKISQLTLTFKEIIFNYRKQPQCKPQVFRNVYVDWKALRRTGKSGPDHVDIITFYNEIFVPAVKPLLVEIAPGGSAQSGSQVPEAKNNTNGVNPSSPRTSSFPSLPDMSPKKVSAAHNVYVSPLRSSKMDALISHSSRSYYACVGESTHAYQSPSKDLTAINNRLNGNRKVRGTLNFDDVDVGLVTDSVVANSLYVQNGSCASSSHMVVKSEQQDS.

The segment at 411-604 is domain A; it reads TPVTTAMTTA…EKGSSMYNSL (194 aa). Residues 411–855 form a pocket region; that stretch reads TPVTTAMTTA…NEIFVPAVKP (445 aa). Residues 605 to 724 form a spacer region; that stretch reads IVARPALSAE…PGGGGETCAE (120 aa). Positions 725–855 are domain B; sequence TAVNVFFSKI…NEIFVPAVKP (131 aa). A compositionally biased stretch (polar residues) spans 866 to 893; that stretch reads AQSGSQVPEAKNNTNGVNPSSPRTSSFP. Positions 866-898 are disordered; the sequence is AQSGSQVPEAKNNTNGVNPSSPRTSSFPSLPDM.

Belongs to the retinoblastoma protein (RB) family.

The protein localises to the nucleus. Its function is as follows. Regulator of biological processes that recruits a histone deacetylase to control gene transcription. May play a role in the entry into mitosis, negatively regulating the cell proliferation. Formation of stable complexes with geminiviridae replication-associated proteins may create a cellular environment which favors viral DNA replication. In Scutellaria baicalensis (Baical skullcap), this protein is Retinoblastoma-related protein (RB).